The following is a 164-amino-acid chain: C-phycoerythrin alpha chain (164 aa).

(2R,3E)-phycoerythrobilin is bound by residues cysteine 82 and cysteine 139.

It belongs to the phycobiliprotein family. Heterodimer of an alpha and a beta chain. In terms of processing, contains two covalently linked bilin chromophores.

It is found in the cellular thylakoid membrane. Light-harvesting photosynthetic bile pigment-protein from the phycobiliprotein complex. The polypeptide is C-phycoerythrin alpha chain (cpeA) (Microchaete diplosiphon (Fremyella diplosiphon)).